We begin with the raw amino-acid sequence, 337 residues long: Homeobox protein knotted-1-like 4 (337 aa).

Disordered stretches follow at residues 1–56 and 159–190; these read MEQQ…SFHE and FTLD…GLPE. The segment covering 27–38 has biased composition (low complexity); the sequence is PTSTSTSPAVPS. One can recognise an ELK domain in the interval 200-220; that stretch reads ELKSHLLNKYSGYLSSLWREL. Positions 221–284 form a DNA-binding region, homeobox; TALE-type; the sequence is SKKKKKGKLP…NQRKRHWKPT (64 aa).

The protein belongs to the TALE/KNOX homeobox family.

It localises to the nucleus. The protein is Homeobox protein knotted-1-like 4 (OSH10) of Oryza sativa subsp. japonica (Rice).